The primary structure comprises 379 residues: Homoserine O-succinyltransferase (379 aa).

Residues 51–360 (NAVLICHALS…DAPQGHDAFL (310 aa)) form the AB hydrolase-1 domain. The active-site Nucleophile is S157. R227 serves as a coordination point for substrate. Residues D323 and H356 contribute to the active site. Substrate is bound at residue D357.

This sequence belongs to the AB hydrolase superfamily. MetX family. In terms of assembly, homodimer.

It is found in the cytoplasm. The enzyme catalyses L-homoserine + succinyl-CoA = O-succinyl-L-homoserine + CoA. It functions in the pathway amino-acid biosynthesis; L-methionine biosynthesis via de novo pathway; O-succinyl-L-homoserine from L-homoserine: step 1/1. Functionally, transfers a succinyl group from succinyl-CoA to L-homoserine, forming succinyl-L-homoserine. In Pseudomonas fluorescens (strain ATCC BAA-477 / NRRL B-23932 / Pf-5), this protein is Homoserine O-succinyltransferase.